The primary structure comprises 143 residues: Histone H2B (143 aa).

Residues 1 to 52 (MAPKPASTAGKAPASTASKAPVKSDAAKTASKSKVSSGADGEKKKRKKTRKE) are disordered. Position 11 is an N6-acetyllysine; alternate (Lys-11). A Glycyl lysine isopeptide (Lys-Gly) (interchain with G-Cter in SUMO); alternate cross-link involves residue Lys-11. At Ser-15 the chain carries Phosphoserine. The residue at position 19 (Lys-19) is an N6-acetyllysine. Positions 23-39 (KSDAAKTASKSKVSSGA) are enriched in low complexity. Lys-137 participates in a covalent cross-link: Glycyl lysine isopeptide (Lys-Gly) (interchain with G-Cter in ubiquitin).

The protein belongs to the histone H2B family. In terms of assembly, the nucleosome is a histone octamer containing two molecules each of H2A, H2B, H3 and H4 assembled in one H3-H4 heterotetramer and two H2A-H2B heterodimers. The octamer wraps approximately 147 bp of DNA. In terms of processing, monoubiquitinated to form H2BK123ub1. H2BK123ub1 gives a specific tag for epigenetic transcriptional activation and is also prerequisite for H3K4me and H3K79me formation. H2BK123ub1 also modulates the formation of double-strand breaks during meiosis and is a prerequisite for DNA-damage checkpoint activation. Phosphorylated to form H2BS10ph during progression through meiotic prophase. May be correlated with chromosome condensation. Post-translationally, acetylation of N-terminal lysines and particularly formation of H2BK11ac has a positive effect on transcription. In terms of processing, sumoylation to form H2BK6su occurs preferentially near the telomeres and represses gene transcription.

Its subcellular location is the nucleus. It is found in the chromosome. Its function is as follows. Core component of nucleosome. Nucleosomes wrap and compact DNA into chromatin, limiting DNA accessibility to the cellular machineries which require DNA as a template. Histones thereby play a central role in transcription regulation, DNA repair, DNA replication and chromosomal stability. DNA accessibility is regulated via a complex set of post-translational modifications of histones, also called histone code, and nucleosome remodeling. This is Histone H2B (htbA) from Agaricus bisporus (White button mushroom).